The primary structure comprises 338 residues: RNA 3'-terminal phosphate cyclase (338 aa).

Residues Q103 and 283 to 287 (YLADQ) contribute to the ATP site. Residue H308 is the Tele-AMP-histidine intermediate of the active site.

It belongs to the RNA 3'-terminal cyclase family. Type 1 subfamily.

Its subcellular location is the cytoplasm. The enzyme catalyses a 3'-end 3'-phospho-ribonucleotide-RNA + ATP = a 3'-end 2',3'-cyclophospho-ribonucleotide-RNA + AMP + diphosphate. Functionally, catalyzes the conversion of 3'-phosphate to a 2',3'-cyclic phosphodiester at the end of RNA. The mechanism of action of the enzyme occurs in 3 steps: (A) adenylation of the enzyme by ATP; (B) transfer of adenylate to an RNA-N3'P to produce RNA-N3'PP5'A; (C) and attack of the adjacent 2'-hydroxyl on the 3'-phosphorus in the diester linkage to produce the cyclic end product. The biological role of this enzyme is unknown but it is likely to function in some aspects of cellular RNA processing. This chain is RNA 3'-terminal phosphate cyclase, found in Escherichia coli O17:K52:H18 (strain UMN026 / ExPEC).